We begin with the raw amino-acid sequence, 199 residues long: MARCKS-related protein (199 aa).

Positions 1-199 are disordered; it reads MGSQSSKAPR…GPASASAENE (199 aa). A lipid anchor (N-myristoyl glycine) is attached at G2. Residue T14 is modified to Phosphothreonine. Residues 16–26 are compositionally biased toward low complexity; that stretch reads EEAAGASPAKA. 3 positions are modified to phosphoserine: S22, S36, and S48. Residues 53–64 are compositionally biased toward low complexity; it reads GADEAAGATGDA. S71 bears the Phosphoserine mark. Positions 74-85 are enriched in basic and acidic residues; the sequence is AEAKGEVAPKET. At T85 the chain carries Phosphothreonine. Basic residues predominate over residues 86-98; sequence PKKKKKFSFKKPF. Positions 87-110 are effector domain involved in lipid-binding and calmodulin-binding; it reads KKKKKFSFKKPFKLSGLSFKRNRK. S93, S101, and S104 each carry phosphoserine; by PKC. S119 carries the phosphoserine modification. Residue S120 is modified to Phosphoserine; by MAPK8. Phosphoserine is present on residues S132 and S135. A Phosphothreonine; by MAPK8 modification is found at T148. Residues S151, S162, and S165 each carry the phosphoserine modification. The span at 175 to 199 shows a compositional bias: low complexity; the sequence is GPQAAEPSTPSGPESGPASASAENE. Phosphothreonine; by MAPK8 is present on T183.

Belongs to the MARCKS family. In terms of assembly, binds to filamentous actin (F-actin), but not to monomeric G-actin, independently of its phosphorylation status. Interacts with calmodulin. Post-translationally, phosphorylated. Phosphorylation at Ser-120 and Thr-183 is non-redundantly catalyzed by MAPK8 in vivo. Phosphorylation at Thr-148 is preferentially catalyzed by MAPK8 in vivo, but this modification can also be catalyzed by other kinases in the absence of MAPK8. May be phosphorylated by protein kinase C, which disrupts the interaction with calmodulin.

The protein localises to the cytoplasm. The protein resides in the cytoskeleton. It is found in the cell membrane. Controls cell movement by regulating actin cytoskeleton homeostasis and filopodium and lamellipodium formation. When unphosphorylated, induces cell migration. When phosphorylated by MAPK8, induces actin bundles formation and stabilization, thereby reducing actin plasticity, hence restricting cell movement, including neuronal migration. May be involved in coupling the protein kinase C and calmodulin signal transduction systems. The chain is MARCKS-related protein (Marcksl1) from Rattus norvegicus (Rat).